The following is a 256-amino-acid chain: Thiazole synthase (256 aa).

Lys95 acts as the Schiff-base intermediate with DXP in catalysis. Residues Gly156, 182-183 (AG), and 204-205 (NT) contribute to the 1-deoxy-D-xylulose 5-phosphate site.

The protein belongs to the ThiG family. As to quaternary structure, homotetramer. Forms heterodimers with either ThiH or ThiS.

The protein resides in the cytoplasm. The catalysed reaction is [ThiS sulfur-carrier protein]-C-terminal-Gly-aminoethanethioate + 2-iminoacetate + 1-deoxy-D-xylulose 5-phosphate = [ThiS sulfur-carrier protein]-C-terminal Gly-Gly + 2-[(2R,5Z)-2-carboxy-4-methylthiazol-5(2H)-ylidene]ethyl phosphate + 2 H2O + H(+). The protein operates within cofactor biosynthesis; thiamine diphosphate biosynthesis. Functionally, catalyzes the rearrangement of 1-deoxy-D-xylulose 5-phosphate (DXP) to produce the thiazole phosphate moiety of thiamine. Sulfur is provided by the thiocarboxylate moiety of the carrier protein ThiS. In vitro, sulfur can be provided by H(2)S. The protein is Thiazole synthase of Shigella dysenteriae serotype 1 (strain Sd197).